The chain runs to 24 residues: Ascaphin-6 (24 aa).

As to expression, expressed by the skin glands.

It localises to the secreted. In terms of biological role, antimicrobial peptide that shows higher potency against Gram-negative bacteria than against Gram-positive bacteria. Has a very week hemolytic activity. The polypeptide is Ascaphin-6 (Ascaphus truei (Coastal tailed frog)).